The primary structure comprises 469 residues: ATP synthase subunit beta (469 aa).

155-162 is an ATP binding site; that stretch reads GGAGVGKT.

The protein belongs to the ATPase alpha/beta chains family. In terms of assembly, F-type ATPases have 2 components, CF(1) - the catalytic core - and CF(0) - the membrane proton channel. CF(1) has five subunits: alpha(3), beta(3), gamma(1), delta(1), epsilon(1). CF(0) has three main subunits: a(1), b(2) and c(9-12). The alpha and beta chains form an alternating ring which encloses part of the gamma chain. CF(1) is attached to CF(0) by a central stalk formed by the gamma and epsilon chains, while a peripheral stalk is formed by the delta and b chains.

Its subcellular location is the cell inner membrane. The enzyme catalyses ATP + H2O + 4 H(+)(in) = ADP + phosphate + 5 H(+)(out). In terms of biological role, produces ATP from ADP in the presence of a proton gradient across the membrane. The catalytic sites are hosted primarily by the beta subunits. The polypeptide is ATP synthase subunit beta (Helicobacter pylori (strain ATCC 700392 / 26695) (Campylobacter pylori)).